Here is a 564-residue protein sequence, read N- to C-terminus: Rho guanine nucleotide exchange factor 9 (564 aa).

In terms of domain architecture, SH3 spans aspartate 8–asparagine 67. The tract at residues arginine 100–glutamate 110 is interaction with GPHN. Residues methionine 103–arginine 287 form the DH domain. Positions glutamate 318–lysine 425 constitute a PH domain. The tract at residues lysine 451–proline 470 is disordered. Serine 502 carries the phosphoserine modification.

In terms of assembly, interacts with GPHN.

It localises to the cytoplasm. Its subcellular location is the postsynaptic density. In terms of biological role, acts as a guanine nucleotide exchange factor (GEF) for CDC42. Promotes formation of GPHN clusters. This Pongo abelii (Sumatran orangutan) protein is Rho guanine nucleotide exchange factor 9 (ARHGEF9).